The sequence spans 935 residues: Progesterone receptor (935 aa).

The interval 1–164 is AF3; mediates transcriptional activation; the sequence is MTELKAKGPR…PATQRVLSPL (164 aa). The disordered stretch occupies residues 1–256; that stretch reads MTELKAKGPR…AAAGGGAAAV (256 aa). The segment at 1-568 is modulating, Pro-Rich; the sequence is MTELKAKGPR…YSFESLPQKI (568 aa). A Phosphoserine modification is found at Ser20. Positions 55-59 match the LXXL motif 1 motif; that stretch reads LDGLL. Ser81 carries the phosphoserine modification. Residues 115–119 carry the LXXL motif 2 motif; the sequence is LDTLL. Ser130 and Ser162 each carry phosphoserine. Residues 165-305 form a mediates transcriptional transrepression region; that stretch reads MSRSGGKAGD…LATTTMDFTH (141 aa). The Nuclear localization signal signature appears at 183–187; that stretch reads KVLPR. Ser190 and Ser213 each carry phosphoserine. The segment covering 220–231 has biased composition (acidic residues); it reads EVEEEDGSESED. The segment covering 232 to 246 has biased composition (low complexity); sequence SAGPLLKGKPRALGG. Position 294 is a phosphoserine; by MAPK1 (Ser294). The interval 328 to 353 is disordered; sequence SYDGGAGAASAFAPPRSSPSASSTPV. A compositionally biased stretch (low complexity) spans 335–350; it reads AASAFAPPRSSPSASS. Ser345 carries the post-translational modification Phosphoserine; by MAPK. Residue Lys388 forms a Glycyl lysine isopeptide (Lys-Gly) (interchain with G-Cter in SUMO); alternate linkage. A Glycyl lysine isopeptide (Lys-Gly) (interchain with G-Cter in ubiquitin); alternate cross-link involves residue Lys388. Phosphoserine; by CDK2 is present on Ser400. The disordered stretch occupies residues 415–452; sequence PDFPLGPPPPLPPRAPPSRPGEAAVTAAPAGASVSSAS. The segment covering 418-433 has biased composition (pro residues); that stretch reads PLGPPPPLPPRAPPSR. The span at 434 to 452 shows a compositional bias: low complexity; sequence PGEAAVTAAPAGASVSSAS. Residues 456 to 548 are AF1; mediates transcriptional activation; it reads STLECILYKA…VYPPYLNYLR (93 aa). Lys533 is covalently cross-linked (Glycyl lysine isopeptide (Lys-Gly) (interchain with G-Cter in SUMO)). NR C4-type zinc fingers lie at residues 569 to 589 and 605 to 629; these read CLICGDEASGCHYGVLTCGSC and CAGRNDCIVDKIRRKNCPACRLRKC. A DNA-binding region (nuclear receptor) is located at residues 569 to 641; sequence CLICGDEASG…AGMVLGGRKF (73 aa). Ser678 is subject to Phosphoserine. Positions 681–915 constitute an NR LBD domain; that stretch reads QDIQLIPPLI…EFPEMMSEVI (235 aa). The tract at residues 689–935 is AF2; mediates transcriptional activation; sequence LINLLVSIEP…MVKPLLFHKK (247 aa). Arg768 contacts progesterone.

Belongs to the nuclear hormone receptor family. In terms of assembly, interacts with SMARD1 and UNC45A. Interacts with CUEDC2; the interaction promotes ubiquitination, decreases sumoylation, and represses transcriptional activity. Interacts with PIAS3; the interaction promotes sumoylation of PR in a hormone-dependent manner, inhibits DNA-binding, and alters nuclear export. Interacts with SP1; the interaction requires ligand-induced phosphorylation on Ser-345 by ERK1/2-MAPK. Interacts with PRMT2. Interacts with NCOA2 and NCOA1. Interacts with KLF9. Interacts with GTF2B. Phosphorylated on multiple serine sites. Several of these sites are hormone-dependent. Phosphorylation on Ser-294 is highly hormone-dependent and modulates ubiquitination and sumoylation on Lys-388. Phosphorylation on Ser-345 also requires induction by hormone. Basal phosphorylation on Ser-81, Ser-162, Ser-190 and Ser-400 is increased in response to progesterone and can be phosphorylated in vitro by the CDK2-A1 complex. Increased levels of phosphorylation on Ser-400 also in the presence of EGF, heregulin, IGF, PMA and FBS. Phosphorylation at this site by CDK2 is ligand-independent, and increases nuclear translocation and transcriptional activity. Phosphorylation at Ser-162 and Ser-294, but not at Ser-190, is impaired during the G(2)/M phase of the cell cycle. Phosphorylation on Ser-345 by ERK1/2 MAPK is required for interaction with SP1. In terms of processing, sumoylation is hormone-dependent and represses transcriptional activity. Sumoylation on all three sites is enhanced by PIAS3. Desumoylated by SENP1. Sumoylation on Lys-388, the main site of sumoylation, is repressed by ubiquitination on the same site, and modulated by phosphorylation at Ser-294. Post-translationally, ubiquitination is hormone-dependent and represses sumoylation on the same site. Promoted by MAPK-mediated phosphorylation on Ser-294. Ubiquitinated by UBR5, leading to its degradation: UBR5 specifically recognizes and binds ligand-bound PGR when it is not associated with coactivators (NCOAs). In presence of NCOAs, the UBR5-degron is not accessible, preventing its ubiquitination and degradation. Palmitoylated by ZDHHC7 and ZDHHC21. Palmitoylation is required for plasma membrane targeting and for rapid intracellular signaling via ERK and AKT kinases and cAMP generation.

The protein localises to the nucleus. The protein resides in the cytoplasm. Its function is as follows. The steroid hormones and their receptors are involved in the regulation of eukaryotic gene expression and affect cellular proliferation and differentiation in target tissues. Transcriptional activator of several progesteron-dependent promoters in a variety of cell types. Involved in activation of SRC-dependent MAPK signaling on hormone stimulation. The sequence is that of Progesterone receptor (PGR) from Macaca sylvanus (Barbary macaque).